The chain runs to 98 residues: NADH-ubiquinone oxidoreductase chain 4L (98 aa).

The next 3 helical transmembrane spans lie at 2–22 (PSIS…MLMF), 29–49 (SLLC…LIIL), and 61–81 (ILLL…LVMI).

This sequence belongs to the complex I subunit 4L family. In terms of assembly, core subunit of respiratory chain NADH dehydrogenase (Complex I) which is composed of 45 different subunits.

It localises to the mitochondrion inner membrane. The catalysed reaction is a ubiquinone + NADH + 5 H(+)(in) = a ubiquinol + NAD(+) + 4 H(+)(out). Its function is as follows. Core subunit of the mitochondrial membrane respiratory chain NADH dehydrogenase (Complex I) which catalyzes electron transfer from NADH through the respiratory chain, using ubiquinone as an electron acceptor. Part of the enzyme membrane arm which is embedded in the lipid bilayer and involved in proton translocation. This is NADH-ubiquinone oxidoreductase chain 4L (MT-ND4L) from Mirza coquereli (Coquerel's giant mouse lemur).